Consider the following 240-residue polypeptide: Uridylate kinase (240 aa).

ATP is bound at residue 13 to 16 (KFSG). Gly55 is a binding site for UMP. The ATP site is built by Gly56 and Arg60. Residues Asp76 and 137–144 (TGNPFFTT) each bind UMP. Thr164, Tyr170, and Asp173 together coordinate ATP.

The protein belongs to the UMP kinase family. Homohexamer.

Its subcellular location is the cytoplasm. It carries out the reaction UMP + ATP = UDP + ADP. Its pathway is pyrimidine metabolism; CTP biosynthesis via de novo pathway; UDP from UMP (UMPK route): step 1/1. Inhibited by UTP. In terms of biological role, catalyzes the reversible phosphorylation of UMP to UDP. The protein is Uridylate kinase of Helicobacter acinonychis (strain Sheeba).